Here is a 148-residue protein sequence, read N- to C-terminus: Snaclec 3 (148 aa).

An N-terminal signal peptide occupies residues 1–23 (WGDSSSSASACWSCSSPLSGTEA). Disulfide bonds link C27-C38, C55-C144, and C121-C136. The region spanning 34–145 (YDQNCYKAFE…CSGTHSFVCK (112 aa)) is the C-type lectin domain.

Belongs to the snaclec family. Heterodimer; disulfide-linked. In terms of tissue distribution, expressed by the venom gland.

It localises to the secreted. Functionally, interferes with one step of hemostasis (modulation of platelet aggregation, or coagulation cascade, for example). This chain is Snaclec 3, found in Echis carinatus sochureki (Saw-scaled viper).